A 106-amino-acid chain; its full sequence is UPF0449 protein C19orf25 homolog (106 aa).

This sequence belongs to the UPF0449 family.

This Xenopus tropicalis (Western clawed frog) protein is UPF0449 protein C19orf25 homolog.